The chain runs to 173 residues: MEESFLESFGRLSLRQQQPPPPRPPAPPPLRGTPPRRHSFRKHLYLLRGLPGSGKTTLARQLQHDFPRALIFSTDDFFFREDGAYEFNPDFLEEAHEWNQKRARKAMRNGISPIIIDNTNLHAWEMKPYAVMVFQTEQKNLFRLEMDMVVFRPEMKKHSWSPKRENTPNERTV.

Positions 1 to 35 (MEESFLESFGRLSLRQQQPPPPRPPAPPPLRGTPP) are disordered. A compositionally biased stretch (pro residues) spans 18-32 (QPPPPRPPAPPPLRG).

In terms of assembly, interacts with dynactin subunit proteins, including DCTN4, DCTN5 and DCTN5.

Might play a role in adipocyte differentiation and triglyceride accumulation. This is NEDD4-binding protein 2-like 1 (N4BP2L1) from Bos taurus (Bovine).